We begin with the raw amino-acid sequence, 367 residues long: UDP-N-acetylglucosamine--N-acetylmuramyl-(pentapeptide) pyrophosphoryl-undecaprenol N-acetylglucosamine transferase (367 aa).

UDP-N-acetyl-alpha-D-glucosamine contacts are provided by residues 15 to 17, N127, R163, S191, I249, and Q294; that span reads TGG.

Belongs to the glycosyltransferase 28 family. MurG subfamily.

The protein resides in the cell inner membrane. It carries out the reaction di-trans,octa-cis-undecaprenyl diphospho-N-acetyl-alpha-D-muramoyl-L-alanyl-D-glutamyl-meso-2,6-diaminopimeloyl-D-alanyl-D-alanine + UDP-N-acetyl-alpha-D-glucosamine = di-trans,octa-cis-undecaprenyl diphospho-[N-acetyl-alpha-D-glucosaminyl-(1-&gt;4)]-N-acetyl-alpha-D-muramoyl-L-alanyl-D-glutamyl-meso-2,6-diaminopimeloyl-D-alanyl-D-alanine + UDP + H(+). It functions in the pathway cell wall biogenesis; peptidoglycan biosynthesis. In terms of biological role, cell wall formation. Catalyzes the transfer of a GlcNAc subunit on undecaprenyl-pyrophosphoryl-MurNAc-pentapeptide (lipid intermediate I) to form undecaprenyl-pyrophosphoryl-MurNAc-(pentapeptide)GlcNAc (lipid intermediate II). This chain is UDP-N-acetylglucosamine--N-acetylmuramyl-(pentapeptide) pyrophosphoryl-undecaprenol N-acetylglucosamine transferase, found in Burkholderia lata (strain ATCC 17760 / DSM 23089 / LMG 22485 / NCIMB 9086 / R18194 / 383).